A 191-amino-acid chain; its full sequence is Ribosome maturation factor RimM (191 aa).

Positions 114–191 (EDEYYWVDLI…RIVVDWQPDY (78 aa)) constitute a PRC barrel domain.

This sequence belongs to the RimM family. In terms of assembly, binds ribosomal protein uS19.

Its subcellular location is the cytoplasm. An accessory protein needed during the final step in the assembly of 30S ribosomal subunit, possibly for assembly of the head region. Essential for efficient processing of 16S rRNA. May be needed both before and after RbfA during the maturation of 16S rRNA. It has affinity for free ribosomal 30S subunits but not for 70S ribosomes. The protein is Ribosome maturation factor RimM of Paracidovorax citrulli (strain AAC00-1) (Acidovorax citrulli).